The sequence spans 636 residues: DNA mismatch repair protein MutL (636 aa).

The disordered stretch occupies residues Arg362–Glu393. Over residues Lys363–Glu393 the composition is skewed to basic and acidic residues.

Belongs to the DNA mismatch repair MutL/HexB family.

Functionally, this protein is involved in the repair of mismatches in DNA. It is required for dam-dependent methyl-directed DNA mismatch repair. May act as a 'molecular matchmaker', a protein that promotes the formation of a stable complex between two or more DNA-binding proteins in an ATP-dependent manner without itself being part of a final effector complex. This chain is DNA mismatch repair protein MutL, found in Lactobacillus helveticus (strain DPC 4571).